Reading from the N-terminus, the 389-residue chain is S-adenosylmethionine synthase (389 aa).

ATP is bound at residue His19. A Mg(2+)-binding site is contributed by Asp21. Residue Glu47 coordinates K(+). Glu60 and Gln103 together coordinate L-methionine. Positions Gln103–Arg113 are flexible loop. Residues Asp168–Lys170, Arg234–Phe235, Asp243, Arg249–Lys250, Ala266, and Lys270 contribute to the ATP site. Asp243 is a binding site for L-methionine. Lys274 serves as a coordination point for L-methionine.

This sequence belongs to the AdoMet synthase family. In terms of assembly, homotetramer; dimer of dimers. Requires Mg(2+) as cofactor. It depends on K(+) as a cofactor.

Its subcellular location is the cytoplasm. The catalysed reaction is L-methionine + ATP + H2O = S-adenosyl-L-methionine + phosphate + diphosphate. It participates in amino-acid biosynthesis; S-adenosyl-L-methionine biosynthesis; S-adenosyl-L-methionine from L-methionine: step 1/1. Functionally, catalyzes the formation of S-adenosylmethionine (AdoMet) from methionine and ATP. The overall synthetic reaction is composed of two sequential steps, AdoMet formation and the subsequent tripolyphosphate hydrolysis which occurs prior to release of AdoMet from the enzyme. This chain is S-adenosylmethionine synthase, found in Nitratidesulfovibrio vulgaris (strain DSM 19637 / Miyazaki F) (Desulfovibrio vulgaris).